We begin with the raw amino-acid sequence, 684 residues long: Glycine--tRNA ligase beta subunit (684 aa).

It belongs to the class-II aminoacyl-tRNA synthetase family. As to quaternary structure, tetramer of two alpha and two beta subunits.

It is found in the cytoplasm. It catalyses the reaction tRNA(Gly) + glycine + ATP = glycyl-tRNA(Gly) + AMP + diphosphate. The protein is Glycine--tRNA ligase beta subunit of Pseudomonas aeruginosa (strain UCBPP-PA14).